The sequence spans 336 residues: Mitochondrial amidoxime reducing component 2 (336 aa).

A mitochondrion-targeting transit peptide spans 1–35; the sequence is MGAAGSSALARLGLPALPGPRWLGVAALGLAAVAL. Glycyl lysine isopeptide (Lys-Gly) (interchain with G-Cter in ubiquitin) cross-links involve residues K138, K144, K173, K187, K287, and K294. Residues 188–334 form the MOSC domain; that stretch reads ARASNEIFPS…LKVGDPVYQM (147 aa).

In terms of assembly, component of a complex composed of cytochrome b5, NADH-cytochrome b5 reductase (CYB5R3) and MTARC2. Mo-molybdopterin serves as cofactor. Post-translationally, ubiquitinated by PRKN during mitophagy, leading to its degradation and enhancement of mitophagy. Deubiquitinated by USP30.

The protein localises to the mitochondrion outer membrane. The protein resides in the peroxisome. The catalysed reaction is N(omega)-hydroxy-L-arginine + 2 Fe(II)-[cytochrome b5] + 2 H(+) = L-arginine + 2 Fe(III)-[cytochrome b5] + H2O. In terms of biological role, catalyzes the reduction of N-oxygenated molecules, acting as a counterpart of cytochrome P450 and flavin-containing monooxygenases in metabolic cycles. As a component of prodrug-converting system, reduces a multitude of N-hydroxylated prodrugs particularly amidoximes, leading to increased drug bioavailability. May be involved in mitochondrial N(omega)-hydroxy-L-arginine (NOHA) reduction, regulating endogenous nitric oxide levels and biosynthesis. Postulated to cleave the N-OH bond of N-hydroxylated substrates in concert with electron transfer from NADH to cytochrome b5 reductase then to cytochrome b5, the ultimate electron donor that primes the active site for substrate reduction. The chain is Mitochondrial amidoxime reducing component 2 (MTARC2) from Bos taurus (Bovine).